The sequence spans 111 residues: Elevenin (111 aa).

The signal sequence occupies residues 1–24; that stretch reads MAPSQKALLVLVLSMLLTASDSRA. A disulfide bridge links Cys29 with Cys38. The propeptide occupies 44 to 111; sequence KRGGDSLSVG…TEQLDRLLTL (68 aa).

The protein belongs to the elevenin family. In terms of assembly, monomer. In terms of tissue distribution, expressed by the venom duct.

It localises to the secreted. Its function is as follows. May mimic the function of prey elevenin neuropeptide. In vivo, intracranial injection in mice induces hyperactivity. The protein is Elevenin of Conus ebraeus (Hebrew cone).